The primary structure comprises 100 residues: NADH-quinone oxidoreductase subunit K (100 aa).

The next 3 helical transmembrane spans lie at 4–24 (LQHGLILAAILFVLGLTGLVI), 28–48 (LLFMLIGLEIMINAAALAFVV), and 60–80 (IMYILAISLAAAEASIGLALL).

It belongs to the complex I subunit 4L family. NDH-1 is composed of 13 different subunits. Subunits NuoA, H, J, K, L, M, N constitute the membrane sector of the complex.

The protein localises to the cell inner membrane. It catalyses the reaction a quinone + NADH + 5 H(+)(in) = a quinol + NAD(+) + 4 H(+)(out). Functionally, NDH-1 shuttles electrons from NADH, via FMN and iron-sulfur (Fe-S) centers, to quinones in the respiratory chain. The immediate electron acceptor for the enzyme in this species is believed to be ubiquinone. Couples the redox reaction to proton translocation (for every two electrons transferred, four hydrogen ions are translocated across the cytoplasmic membrane), and thus conserves the redox energy in a proton gradient. This Cronobacter sakazakii (strain ATCC BAA-894) (Enterobacter sakazakii) protein is NADH-quinone oxidoreductase subunit K.